Reading from the N-terminus, the 427-residue chain is MSVEHATPVQQPAHAAASVRPVMILAGGTGGHIFPGLAVAKVLRARGVPVTWLGADGAMETRLVPQHAIQIDTLAISGLRGKGIVKLLGAPVRVMRAVRAAGFVLRKRQPRAVISFGGFAAGPGGLAARLLGVPLLVHEQNRAPGMTNKVLSRFARRVLTGFPGSFAGEEAVGNPVREEIAALPAPATRLVGRGGPVRLLVLGGSQGARALNNAVPAALAALGHPAVDVRHQCGEKLRAEAEAAYAQAAVNASVEPFIADMAAAYAWADLVVCRAGASTLAEVCAAGVGSVLVPFAAAVDDHQTRNAEYLVSAEAAVLLKQDDTLAVRLQQVLQTLLADPARRLAMAQAARTLAKPDAAERIADIILQEAGNGKSGMGNGQSAEQLQEHTVIHQNKRTDQALDAASASLHPIPDSRFPIRTSAGGAQ.

Residues 29 to 31 (TGG), N141, R177, S205, I258, and Q303 contribute to the UDP-N-acetyl-alpha-D-glucosamine site. A disordered region spans residues 408–427 (SLHPIPDSRFPIRTSAGGAQ).

The protein belongs to the glycosyltransferase 28 family. MurG subfamily.

It localises to the cell inner membrane. It catalyses the reaction di-trans,octa-cis-undecaprenyl diphospho-N-acetyl-alpha-D-muramoyl-L-alanyl-D-glutamyl-meso-2,6-diaminopimeloyl-D-alanyl-D-alanine + UDP-N-acetyl-alpha-D-glucosamine = di-trans,octa-cis-undecaprenyl diphospho-[N-acetyl-alpha-D-glucosaminyl-(1-&gt;4)]-N-acetyl-alpha-D-muramoyl-L-alanyl-D-glutamyl-meso-2,6-diaminopimeloyl-D-alanyl-D-alanine + UDP + H(+). Its pathway is cell wall biogenesis; peptidoglycan biosynthesis. In terms of biological role, cell wall formation. Catalyzes the transfer of a GlcNAc subunit on undecaprenyl-pyrophosphoryl-MurNAc-pentapeptide (lipid intermediate I) to form undecaprenyl-pyrophosphoryl-MurNAc-(pentapeptide)GlcNAc (lipid intermediate II). The protein is UDP-N-acetylglucosamine--N-acetylmuramyl-(pentapeptide) pyrophosphoryl-undecaprenol N-acetylglucosamine transferase of Xanthomonas campestris pv. campestris (strain 8004).